We begin with the raw amino-acid sequence, 461 residues long: Glycerol-3-phosphate acyltransferase, chloroplastic (461 aa).

Residues 1–96 (MSMTGSSAYY…SPPNMSASVS (96 aa)) constitute a chloroplast transit peptide. A compositionally biased stretch (low complexity) spans 47–76 (LLSSTSSSSSSSISLRSSTAPSPSCSSVTP). Residues 47-88 (LLSSTSSSSSSSISLRSSTAPSPSCSSVTPKDNCLASAKHSP) are disordered. The HXXXXD motif signature appears at 231 to 236 (HQTEAD).

It belongs to the GPAT/DAPAT family.

The protein resides in the plastid. It is found in the chloroplast stroma. It carries out the reaction sn-glycerol 3-phosphate + an acyl-CoA = a 1-acyl-sn-glycero-3-phosphate + CoA. It participates in phospholipid metabolism; CDP-diacylglycerol biosynthesis; CDP-diacylglycerol from sn-glycerol 3-phosphate: step 1/3. Its function is as follows. Esterifies acyl-group from acyl-ACP to the sn-1 position of glycerol-3-phosphate. The enzyme from chilling-resistant plants discriminates against non-fluid palmitic acid and selects oleic acid whereas the enzyme from sensitive plants accepts both fatty acids. The polypeptide is Glycerol-3-phosphate acyltransferase, chloroplastic (PLSB) (Phaseolus vulgaris (Kidney bean)).